Here is a 302-residue protein sequence, read N- to C-terminus: MAMTDSNPTRCGYVAIVGRPNVGKSTLLNHILGQKLAITSRKPQTTRHNMLGIKTEGDVQAIYVDTPGMHKANDKALNRYMNRNASAALKDVDVVIFVVDRTKWTDEDQLVLERVQYVTGPLIIAVNKTDRMEEKAELIPHLQWLQEQLPNAEVMPISAQQGHNLDALEAQIAKHLPENDHFFPEDQITDRSSRFLAAELVREKIMRQLGAELPYQITVEIEEFKQQGHVLHIHALILVERDGQKKIIIGDKGERIKRIGSEARKDMEVLFDSKVMLNLWVKVKGGWSDDERALRSLGYGDL.

One can recognise an Era-type G domain in the interval 10–178; it reads RCGYVAIVGR…EAQIAKHLPE (169 aa). Residues 18-25 are G1; it reads GRPNVGKS. A GTP-binding site is contributed by 18-25; it reads GRPNVGKS. A G2 region spans residues 44–48; it reads QTTRH. A G3 region spans residues 65-68; it reads DTPG. GTP contacts are provided by residues 65 to 69 and 127 to 130; these read DTPGM and NKTD. The interval 127–130 is G4; the sequence is NKTD. Positions 157 to 159 are G5; that stretch reads ISA. Positions 201-285 constitute a KH type-2 domain; the sequence is VREKIMRQLG…MLNLWVKVKG (85 aa).

Belongs to the TRAFAC class TrmE-Era-EngA-EngB-Septin-like GTPase superfamily. Era GTPase family. In terms of assembly, monomer.

It localises to the cytoplasm. The protein localises to the cell inner membrane. An essential GTPase that binds both GDP and GTP, with rapid nucleotide exchange. Plays a role in 16S rRNA processing and 30S ribosomal subunit biogenesis and possibly also in cell cycle regulation and energy metabolism. The protein is GTPase Era of Pseudomonas putida (strain ATCC 47054 / DSM 6125 / CFBP 8728 / NCIMB 11950 / KT2440).